The primary structure comprises 400 residues: tRNA(Ile)-lysidine synthase (400 aa).

20–25 (SGGLDS) provides a ligand contact to ATP.

This sequence belongs to the tRNA(Ile)-lysidine synthase family.

It is found in the cytoplasm. The catalysed reaction is cytidine(34) in tRNA(Ile2) + L-lysine + ATP = lysidine(34) in tRNA(Ile2) + AMP + diphosphate + H(+). In terms of biological role, ligates lysine onto the cytidine present at position 34 of the AUA codon-specific tRNA(Ile) that contains the anticodon CAU, in an ATP-dependent manner. Cytidine is converted to lysidine, thus changing the amino acid specificity of the tRNA from methionine to isoleucine. The chain is tRNA(Ile)-lysidine synthase from Wigglesworthia glossinidia brevipalpis.